A 273-amino-acid chain; its full sequence is Manganese catalase (273 aa).

Glutamate 35 contributes to the Mn(2+) binding site. Residues aspartate 57 and aspartate 61 each contribute to the Ca(2+) site. Residues glutamate 66, histidine 69, glutamate 149, and histidine 182 each contribute to the Mn(2+) site. Positions 220, 222, and 224 each coordinate Ca(2+). Positions 254-273 (EKPELKPAPPFVHNTLPGRE) are disordered.

This sequence belongs to the manganese catalase family. It depends on Ca(2+) as a cofactor. The cofactor is Mn(2+).

The catalysed reaction is 2 H2O2 = O2 + 2 H2O. In terms of biological role, catalyzes the decomposition of hydrogen peroxide into water and oxygen. The sequence is that of Manganese catalase (ydbD) from Bacillus subtilis (strain 168).